The sequence spans 558 residues: Origin recognition complex subunit 2 (558 aa).

Residues 119–216 (TVSFSVSDNP…TPSKKGKKNT (98 aa)) form a disordered region. Polar residues predominate over residues 136–145 (ANKQTENKTP). Low complexity predominate over residues 169-182 (SQPSDSESDYSASN). Polar residues predominate over residues 193-202 (AAKTPSKVSQ).

It belongs to the ORC2 family. As to quaternary structure, ORC is composed of six subunits.

The protein localises to the nucleus. Functionally, component of the origin recognition complex (ORC) that binds origins of replication. DNA-binding is ATP-dependent, however specific DNA sequences that define origins of replication have not been identified so far. ORC is required to assemble the pre-replication complex necessary to initiate DNA replication. The sequence is that of Origin recognition complex subunit 2 (orc2) from Xenopus laevis (African clawed frog).